A 315-amino-acid polypeptide reads, in one-letter code: Pantothenate kinase (315 aa).

ATP is bound at residue 94–101; sequence GSVAVGKS.

Belongs to the prokaryotic pantothenate kinase family.

The protein localises to the cytoplasm. It carries out the reaction (R)-pantothenate + ATP = (R)-4'-phosphopantothenate + ADP + H(+). It functions in the pathway cofactor biosynthesis; coenzyme A biosynthesis; CoA from (R)-pantothenate: step 1/5. This is Pantothenate kinase from Citrobacter koseri (strain ATCC BAA-895 / CDC 4225-83 / SGSC4696).